A 326-amino-acid polypeptide reads, in one-letter code: Phospho-N-acetylmuramoyl-pentapeptide-transferase (326 aa).

A run of 9 helical transmembrane segments spans residues Ile3 to Ile23, Thr51 to Phe71, Val79 to Leu99, Leu115 to Met135, Ile138 to Val158, Gly169 to Ala189, Met195 to Asn215, Val221 to His243, and Val304 to Tyr324.

It belongs to the glycosyltransferase 4 family. MraY subfamily. Mg(2+) is required as a cofactor.

The protein resides in the cell membrane. The catalysed reaction is UDP-N-acetyl-alpha-D-muramoyl-L-alanyl-gamma-D-glutamyl-L-lysyl-D-alanyl-D-alanine + di-trans,octa-cis-undecaprenyl phosphate = Mur2Ac(oyl-L-Ala-gamma-D-Glu-L-Lys-D-Ala-D-Ala)-di-trans,octa-cis-undecaprenyl diphosphate + UMP. Its pathway is cell wall biogenesis; peptidoglycan biosynthesis. Functionally, catalyzes the initial step of the lipid cycle reactions in the biosynthesis of the cell wall peptidoglycan: transfers peptidoglycan precursor phospho-MurNAc-pentapeptide from UDP-MurNAc-pentapeptide onto the lipid carrier undecaprenyl phosphate, yielding undecaprenyl-pyrophosphoryl-MurNAc-pentapeptide, known as lipid I. The protein is Phospho-N-acetylmuramoyl-pentapeptide-transferase of Streptococcus pneumoniae (strain Hungary19A-6).